A 106-amino-acid chain; its full sequence is Iron-sulfur cluster assembly protein CyaY (106 aa).

It belongs to the frataxin family.

Involved in iron-sulfur (Fe-S) cluster assembly. May act as a regulator of Fe-S biogenesis. The polypeptide is Iron-sulfur cluster assembly protein CyaY (Yersinia enterocolitica serotype O:8 / biotype 1B (strain NCTC 13174 / 8081)).